We begin with the raw amino-acid sequence, 239 residues long: Non-classical arabinogalactan protein 30 (239 aa).

Positions 1 to 24 (MGIIGKSVSLTLFALLCFTSSVFT) are cleaved as a signal peptide. N-linked (GlcNAc...) asparagine glycosylation is present at N106.

It belongs to the non-classical AGP family. In terms of tissue distribution, specifically expressed in root tips.

The protein localises to the secreted. The protein resides in the cell wall. Functionally, proteoglycan required for the timing of seed germination. May function in the abscisic acid (ABA) response. This is Non-classical arabinogalactan protein 30 from Arabidopsis thaliana (Mouse-ear cress).